Consider the following 170-residue polypeptide: ATP synthase subunit b (170 aa).

Residues 3-23 traverse the membrane as a helical segment; the sequence is IKILFFLALPFLAYASEHGGT.

It belongs to the ATPase B chain family. In terms of assembly, F-type ATPases have 2 components, F(1) - the catalytic core - and F(0) - the membrane proton channel. F(1) has five subunits: alpha(3), beta(3), gamma(1), delta(1), epsilon(1). F(0) has three main subunits: a(1), b(2) and c(10-14). The alpha and beta chains form an alternating ring which encloses part of the gamma chain. F(1) is attached to F(0) by a central stalk formed by the gamma and epsilon chains, while a peripheral stalk is formed by the delta and b chains.

It is found in the cell inner membrane. Its function is as follows. F(1)F(0) ATP synthase produces ATP from ADP in the presence of a proton or sodium gradient. F-type ATPases consist of two structural domains, F(1) containing the extramembraneous catalytic core and F(0) containing the membrane proton channel, linked together by a central stalk and a peripheral stalk. During catalysis, ATP synthesis in the catalytic domain of F(1) is coupled via a rotary mechanism of the central stalk subunits to proton translocation. Functionally, component of the F(0) channel, it forms part of the peripheral stalk, linking F(1) to F(0). The sequence is that of ATP synthase subunit b from Campylobacter concisus (strain 13826).